Here is a 308-residue protein sequence, read N- to C-terminus: Protein translocase subunit SecF (308 aa).

The next 6 helical transmembrane spans lie at 28-48 (SIILSLISFIWIGIYKFNFGI), 140-160 (IEAGAMAMLFSFLAIMVYIWV), 164-184 (WYFGLGILIALVHDVILALGF), 194-214 (LSTIAAVLTIIGYSVNDSVVI), 246-266 (ILTVITTLLANLALILFGGEA), and 272-292 (VLVFFGIIAGTYSSIFISAPI).

Belongs to the SecD/SecF family. SecF subfamily. In terms of assembly, forms a complex with SecD. Part of the essential Sec protein translocation apparatus which comprises SecA, SecYEG and auxiliary proteins SecDF-YajC and YidC.

It is found in the cell inner membrane. In terms of biological role, part of the Sec protein translocase complex. Interacts with the SecYEG preprotein conducting channel. SecDF uses the proton motive force (PMF) to complete protein translocation after the ATP-dependent function of SecA. This chain is Protein translocase subunit SecF, found in Rickettsia felis (strain ATCC VR-1525 / URRWXCal2) (Rickettsia azadi).